The chain runs to 129 residues: Protein Turandot A (129 aa).

The N-terminal stretch at 1–21 is a signal peptide; sequence MNSLTGFMCCALLLISPLCMG. N49 carries N-linked (GlcNAc...) asparagine glycosylation.

The protein belongs to the Turandot family.

It is found in the secreted. Functionally, a humoral factor that plays a role in stress tolerance; gives increased resistance to the lethal effects of bacterial challenge and stress. Regulated by the JAK/STAT pathway and NF-KB-like Relish pathway in the fat body, upd3 in the hemocytes and Mekk1 in response to septic injury and consequent immune response. The protein is Protein Turandot A (TotA) of Drosophila yakuba (Fruit fly).